The following is a 1097-amino-acid chain: Nitric oxide synthase-like protein (1097 aa).

Cysteine 77 provides a ligand contact to heme b. 5 residues coordinate L-arginine: glutamine 140, tryptophan 249, tyrosine 250, glutamate 254, and asparagine 259. Residues tryptophan 340 and phenylalanine 353 each contribute to the (6R)-L-erythro-5,6,7,8-tetrahydrobiopterin site. Heme b is bound at residue tyrosine 368. The tract at residues 387–410 is calmodulin-binding; that stretch reads KRPINRKFHFKQIARAVKFTSKLF. One can recognise a Flavodoxin-like domain in the interval 420-615; that stretch reads ATVLYATETG…AFRKWASSVF (196 aa). FMN-binding positions include 426-430 and 561-592; these read TETGK and VFAL…ERIH. The FAD-binding FR-type domain occupies 669-914; it reads KQFVSCTVKA…IRSAPNFHLP (246 aa). FAD contacts are provided by residues 704-715 and 847-857; these read YNPGDHVGIIAC and LQPRFYSISSS. Residues 922 to 940 and 1019 to 1034 contribute to the NADP(+) site; these read ILIG…WHHR and GAHF…AEDV.

The protein belongs to the NOS family. Requires heme b as cofactor. The cofactor is FAD. It depends on FMN as a cofactor.

It catalyses the reaction 2 L-arginine + 3 NADPH + 4 O2 + H(+) = 2 L-citrulline + 2 nitric oxide + 3 NADP(+) + 4 H2O. Functionally, produces nitric oxide (NO) which is a messenger molecule with diverse functions throughout the body. The sequence is that of Nitric oxide synthase-like protein from Bombyx mori (Silk moth).